Here is a 324-residue protein sequence, read N- to C-terminus: 4-hydroxy-3-methylbut-2-enyl diphosphate reductase (324 aa).

C28 lines the [4Fe-4S] cluster pocket. The (2E)-4-hydroxy-3-methylbut-2-enyl diphosphate site is built by H57 and H90. 2 residues coordinate dimethylallyl diphosphate: H57 and H90. Isopentenyl diphosphate is bound by residues H57 and H90. A [4Fe-4S] cluster-binding site is contributed by C112. H140 is a binding site for (2E)-4-hydroxy-3-methylbut-2-enyl diphosphate. Position 140 (H140) interacts with dimethylallyl diphosphate. H140 contacts isopentenyl diphosphate. E142 acts as the Proton donor in catalysis. T180 is a binding site for (2E)-4-hydroxy-3-methylbut-2-enyl diphosphate. A [4Fe-4S] cluster-binding site is contributed by C210. 4 residues coordinate (2E)-4-hydroxy-3-methylbut-2-enyl diphosphate: S238, S239, N240, and S282. Dimethylallyl diphosphate contacts are provided by S238, S239, N240, and S282. Isopentenyl diphosphate-binding residues include S238, S239, N240, and S282.

The protein belongs to the IspH family. The cofactor is [4Fe-4S] cluster.

The catalysed reaction is isopentenyl diphosphate + 2 oxidized [2Fe-2S]-[ferredoxin] + H2O = (2E)-4-hydroxy-3-methylbut-2-enyl diphosphate + 2 reduced [2Fe-2S]-[ferredoxin] + 2 H(+). It catalyses the reaction dimethylallyl diphosphate + 2 oxidized [2Fe-2S]-[ferredoxin] + H2O = (2E)-4-hydroxy-3-methylbut-2-enyl diphosphate + 2 reduced [2Fe-2S]-[ferredoxin] + 2 H(+). It functions in the pathway isoprenoid biosynthesis; dimethylallyl diphosphate biosynthesis; dimethylallyl diphosphate from (2E)-4-hydroxy-3-methylbutenyl diphosphate: step 1/1. The protein operates within isoprenoid biosynthesis; isopentenyl diphosphate biosynthesis via DXP pathway; isopentenyl diphosphate from 1-deoxy-D-xylulose 5-phosphate: step 6/6. In terms of biological role, catalyzes the conversion of 1-hydroxy-2-methyl-2-(E)-butenyl 4-diphosphate (HMBPP) into a mixture of isopentenyl diphosphate (IPP) and dimethylallyl diphosphate (DMAPP). Acts in the terminal step of the DOXP/MEP pathway for isoprenoid precursor biosynthesis. This is 4-hydroxy-3-methylbut-2-enyl diphosphate reductase from Ralstonia nicotianae (strain ATCC BAA-1114 / GMI1000) (Ralstonia solanacearum).